A 181-amino-acid polypeptide reads, in one-letter code: Ribulose bisphosphate carboxylase small subunit, chloroplastic (181 aa).

The transit peptide at 1 to 56 (MASISSSAIATVNRTTSTQASLAAPFTGLKSNVAFPVTKKANNDFSSLPSNGGRVQ) directs the protein to the chloroplast.

The protein belongs to the RuBisCO small chain family. Heterohexadecamer of 8 large and 8 small subunits.

It localises to the plastid. The protein resides in the chloroplast. In terms of biological role, ruBisCO catalyzes two reactions: the carboxylation of D-ribulose 1,5-bisphosphate, the primary event in carbon dioxide fixation, as well as the oxidative fragmentation of the pentose substrate. Both reactions occur simultaneously and in competition at the same active site. Although the small subunit is not catalytic it is essential for maximal activity. This chain is Ribulose bisphosphate carboxylase small subunit, chloroplastic, found in Lactuca sativa (Garden lettuce).